A 451-amino-acid chain; its full sequence is Interferon regulatory factor 4 (451 aa).

Positions asparagine 21–proline 129 form a DNA-binding region, IRF tryptophan pentad repeat. A phosphoserine; by ROCK2 mark is found at serine 447 and serine 448.

The protein belongs to the IRF family. In terms of assembly, interacts with the BATF-JUNB heterodimer. Interacts with BATF (via bZIP domain); the interaction is direct. Interacts with SPIB. Interacts with DEF6. Directly interacts with NLRP3 in the nucleus of Th2 cells; this interaction enhances IRF4 ability to bind to the IL4 promoter and is required for optimal IRF4-dependent IL4 transcription. Interacts with SPI1. Post-translationally, phosphorylation by ROCK2 regulates IL-17 and IL-21 production. As to expression, lymphoid cells.

The protein localises to the nucleus. The protein resides in the cytoplasm. Transcriptional activator. Binds to the interferon-stimulated response element (ISRE) of the MHC class I promoter. Binds the immunoglobulin lambda light chain enhancer, together with PU.1. Probably plays a role in ISRE-targeted signal transduction mechanisms specific to lymphoid cells. Involved in CD8(+) dendritic cell differentiation by forming a complex with the BATF-JUNB heterodimer in immune cells, leading to recognition of AICE sequence (5'-TGAnTCA/GAAA-3'), an immune-specific regulatory element, followed by cooperative binding of BATF and IRF4 and activation of genes. The chain is Interferon regulatory factor 4 from Homo sapiens (Human).